The chain runs to 322 residues: uncharacterized protein (322 aa).

The disordered stretch occupies residues 1 to 63 (MFKIRKRSVP…DEASSSDSHY (63 aa)). Residues 34-49 (FVDDHGKPIAEYRDFP) show a composition bias toward basic and acidic residues. The segment at 245–274 (WKVDRICTYYINRPDKCTRGDNCRFKHDDV) adopts a C3H1-type zinc-finger fold. Residues 278–322 (HRQKEIQSSRNQSWHHRTSSHKYSSENSDHRGYRRHRSRSPHARQ) form a disordered region. Residues 309 to 322 (GYRRHRSRSPHARQ) show a composition bias toward basic residues.

This is an uncharacterized protein from Caenorhabditis elegans.